We begin with the raw amino-acid sequence, 160 residues long: Cyclic pyranopterin monophosphate synthase (160 aa).

Substrate contacts are provided by residues 76–78 (LCH) and 114–115 (ME). Residue D129 is part of the active site.

This sequence belongs to the MoaC family. Homohexamer; trimer of dimers.

The catalysed reaction is (8S)-3',8-cyclo-7,8-dihydroguanosine 5'-triphosphate = cyclic pyranopterin phosphate + diphosphate. Its pathway is cofactor biosynthesis; molybdopterin biosynthesis. Catalyzes the conversion of (8S)-3',8-cyclo-7,8-dihydroguanosine 5'-triphosphate to cyclic pyranopterin monophosphate (cPMP). The protein is Cyclic pyranopterin monophosphate synthase of Vibrio cholerae serotype O1 (strain ATCC 39541 / Classical Ogawa 395 / O395).